A 349-amino-acid chain; its full sequence is Fructose-1,6-bisphosphatase class 1 (349 aa).

Glu113, Asp135, Ile137, and Asp138 together coordinate Mg(2+). Substrate contacts are provided by residues 138–141 (DGSS), Asn230, Tyr258, and Lys288. Glu294 contributes to the Mg(2+) binding site.

Belongs to the FBPase class 1 family. Homotetramer. It depends on Mg(2+) as a cofactor.

It is found in the cytoplasm. It carries out the reaction beta-D-fructose 1,6-bisphosphate + H2O = beta-D-fructose 6-phosphate + phosphate. It functions in the pathway carbohydrate biosynthesis; Calvin cycle. In Nostoc punctiforme (strain ATCC 29133 / PCC 73102), this protein is Fructose-1,6-bisphosphatase class 1.